The following is a 208-amino-acid chain: Thymidylate kinase (208 aa).

Residue 7–14 (GIDGAGKT) coordinates ATP.

The protein belongs to the thymidylate kinase family.

The enzyme catalyses dTMP + ATP = dTDP + ADP. Its function is as follows. Phosphorylation of dTMP to form dTDP in both de novo and salvage pathways of dTTP synthesis. The sequence is that of Thymidylate kinase from Xylella fastidiosa (strain Temecula1 / ATCC 700964).